The primary structure comprises 335 residues: Transcription factor bHLH63 (335 aa).

Residues 110–160 are disordered; sequence MTMNRDDLVEEGEEEKSKITEQNNGSTKSIKKMKHKAKKEENNFSNDSSKV. A bHLH domain is found at 178-228; the sequence is QATDSHSIAERVRREKISERMKFLQDLVPGCDKITGKAGMLDEIINYVQSL.

In terms of assembly, homodimer. Interacts with IBH1. Binds reversibly to CRY2 after blue light illumination. In terms of tissue distribution, expressed constitutively in roots, leaves, and stems.

It is found in the nucleus. Transcription factor that binds DNA to G box 5'-CACGTG-3' and, to a lower extent, to E-box 5'-CANNTG-3' in vitro. Binds to chromatin DNA of the FT gene and promotes its expression, and thus triggers flowering in response to blue light. The chain is Transcription factor bHLH63 (BHLH63) from Arabidopsis thaliana (Mouse-ear cress).